The chain runs to 502 residues: Probable cytosol aminopeptidase (502 aa).

Mn(2+)-binding residues include lysine 269 and aspartate 274. Lysine 281 is a catalytic residue. Mn(2+) is bound by residues aspartate 292, aspartate 351, and glutamate 353. Arginine 355 is an active-site residue.

The protein belongs to the peptidase M17 family. Requires Mn(2+) as cofactor.

The protein localises to the cytoplasm. It carries out the reaction Release of an N-terminal amino acid, Xaa-|-Yaa-, in which Xaa is preferably Leu, but may be other amino acids including Pro although not Arg or Lys, and Yaa may be Pro. Amino acid amides and methyl esters are also readily hydrolyzed, but rates on arylamides are exceedingly low.. The enzyme catalyses Release of an N-terminal amino acid, preferentially leucine, but not glutamic or aspartic acids.. In terms of biological role, presumably involved in the processing and regular turnover of intracellular proteins. Catalyzes the removal of unsubstituted N-terminal amino acids from various peptides. The sequence is that of Probable cytosol aminopeptidase from Shewanella loihica (strain ATCC BAA-1088 / PV-4).